The primary structure comprises 305 residues: Glycine--tRNA ligase alpha subunit (305 aa).

It belongs to the class-II aminoacyl-tRNA synthetase family. Tetramer of two alpha and two beta subunits.

Its subcellular location is the cytoplasm. It catalyses the reaction tRNA(Gly) + glycine + ATP = glycyl-tRNA(Gly) + AMP + diphosphate. The protein is Glycine--tRNA ligase alpha subunit of Streptococcus suis (strain 05ZYH33).